The primary structure comprises 89 residues: MKVKPLGERLLIKPIIEEKKTAGGIVLPDAAKEKPMKAEIVEVGKLPEDCQLKVGDKVIYNKYSGTEIKIDDEDYIIIDVSDILAKIEE.

The protein belongs to the GroES chaperonin family. Heptamer of 7 subunits arranged in a ring. Interacts with the chaperonin GroEL.

It localises to the cytoplasm. Its function is as follows. Together with the chaperonin GroEL, plays an essential role in assisting protein folding. The GroEL-GroES system forms a nano-cage that allows encapsulation of the non-native substrate proteins and provides a physical environment optimized to promote and accelerate protein folding. GroES binds to the apical surface of the GroEL ring, thereby capping the opening of the GroEL channel. This Fervidobacterium nodosum (strain ATCC 35602 / DSM 5306 / Rt17-B1) protein is Co-chaperonin GroES.